The following is a 381-amino-acid chain: Homoserine O-succinyltransferase (381 aa).

An AB hydrolase-1 domain is found at 45–360 (NAVLVCHALN…PHGHDAFLLD (316 aa)). Serine 151 serves as the catalytic Nucleophile. Arginine 221 provides a ligand contact to substrate. Catalysis depends on residues aspartate 321 and histidine 354. Aspartate 355 contacts substrate.

This sequence belongs to the AB hydrolase superfamily. MetX family. In terms of assembly, homodimer.

It is found in the cytoplasm. The catalysed reaction is L-homoserine + succinyl-CoA = O-succinyl-L-homoserine + CoA. The protein operates within amino-acid biosynthesis; L-methionine biosynthesis via de novo pathway; O-succinyl-L-homoserine from L-homoserine: step 1/1. Transfers a succinyl group from succinyl-CoA to L-homoserine, forming succinyl-L-homoserine. The sequence is that of Homoserine O-succinyltransferase from Paraburkholderia phymatum (strain DSM 17167 / CIP 108236 / LMG 21445 / STM815) (Burkholderia phymatum).